Consider the following 457-residue polypeptide: Hydrogenobyrinate a,c-diamide synthase (457 aa).

The GATase cobBQ-type domain occupies 255–441; that stretch reads TVAIAAGRAF…LHTHPAATPG (187 aa). The active-site Nucleophile is C337.

It belongs to the CobB/CbiA family. Requires Mg(2+) as cofactor.

It catalyses the reaction hydrogenobyrinate + 2 L-glutamine + 2 ATP + 2 H2O = hydrogenobyrinate a,c-diamide + 2 L-glutamate + 2 ADP + 2 phosphate + 2 H(+). It functions in the pathway cofactor biosynthesis; adenosylcobalamin biosynthesis; cob(II)yrinate a,c-diamide from precorrin-2 (aerobic route): step 9/10. Its function is as follows. Catalyzes the ATP-dependent amidation of the two carboxylate groups at positions a and c of hydrogenobyrinate, using either L-glutamine or ammonia as the nitrogen source. This chain is Hydrogenobyrinate a,c-diamide synthase, found in Mycobacterium bovis (strain ATCC BAA-935 / AF2122/97).